Consider the following 657-residue polypeptide: 2',3'-cyclic-nucleotide 2'-phosphodiesterase/3'-nucleotidase (657 aa).

Residues 1-26 form the signal peptide; sequence MMNRRHFIQISATSILALSANRFAMA. A divalent metal cation-binding residues include Asp41, His43, Asp86, Asn126, His235, His267, and His269. Substrate is bound by residues Tyr450 and 554–559; that span reads YRAYGN.

This sequence belongs to the 5'-nucleotidase family. A divalent metal cation serves as cofactor.

The protein resides in the periplasm. It carries out the reaction a nucleoside 2',3'-cyclic phosphate + H2O = a nucleoside 3'-phosphate + H(+). The catalysed reaction is a ribonucleoside 3'-phosphate + H2O = a ribonucleoside + phosphate. Functionally, this bifunctional enzyme catalyzes two consecutive reactions during ribonucleic acid degradation. Converts a 2',3'-cyclic nucleotide to a 3'-nucleotide and then the 3'-nucleotide to the corresponding nucleoside and phosphate. In Haemophilus influenzae (strain ATCC 51907 / DSM 11121 / KW20 / Rd), this protein is 2',3'-cyclic-nucleotide 2'-phosphodiesterase/3'-nucleotidase (cpdB).